A 163-amino-acid polypeptide reads, in one-letter code: Ribosome maturation factor RimM (163 aa).

The PRC barrel domain maps to 90-161 (EGRHYWGDLE…VVVDPPEGLL (72 aa)).

The protein belongs to the RimM family. In terms of assembly, binds ribosomal protein uS19.

Its subcellular location is the cytoplasm. An accessory protein needed during the final step in the assembly of 30S ribosomal subunit, possibly for assembly of the head region. Essential for efficient processing of 16S rRNA. May be needed both before and after RbfA during the maturation of 16S rRNA. It has affinity for free ribosomal 30S subunits but not for 70S ribosomes. The chain is Ribosome maturation factor RimM from Anaeromyxobacter dehalogenans (strain 2CP-C).